The sequence spans 138 residues: Ribosome-binding factor A (138 aa).

The protein belongs to the RbfA family. In terms of assembly, monomer. Binds 30S ribosomal subunits, but not 50S ribosomal subunits or 70S ribosomes.

It localises to the cytoplasm. One of several proteins that assist in the late maturation steps of the functional core of the 30S ribosomal subunit. Associates with free 30S ribosomal subunits (but not with 30S subunits that are part of 70S ribosomes or polysomes). Required for efficient processing of 16S rRNA. May interact with the 5'-terminal helix region of 16S rRNA. This chain is Ribosome-binding factor A, found in Pseudoalteromonas atlantica (strain T6c / ATCC BAA-1087).